Consider the following 445-residue polypeptide: Phosphoglucosamine mutase (445 aa).

Residue Ser102 is the Phosphoserine intermediate of the active site. Residues Ser102, Asp241, Asp243, and Asp245 each coordinate Mg(2+). Ser102 carries the post-translational modification Phosphoserine.

This sequence belongs to the phosphohexose mutase family. Mg(2+) serves as cofactor. Post-translationally, activated by phosphorylation.

The catalysed reaction is alpha-D-glucosamine 1-phosphate = D-glucosamine 6-phosphate. Functionally, catalyzes the conversion of glucosamine-6-phosphate to glucosamine-1-phosphate. This chain is Phosphoglucosamine mutase, found in Escherichia coli O157:H7.